A 179-amino-acid chain; its full sequence is HTH-type transcriptional regulator AldR (179 aa).

Positions 32–93 (LDEVDRRILS…DIDPVAVGLP (62 aa)) constitute an HTH asnC-type domain. Residues 51–70 (NNALADTVGIAPSTCHGRVR) constitute a DNA-binding region (H-T-H motif).

In terms of assembly, homooctamer. Homotetramer. Tetramer of dimers. The N-terminal DNA-binding domains are swapped, forming a dimer, and four dimers are assembled into an octamer through crystal symmetry.

The DNA-binding activity of AldR is modulated by interaction of AldR with various amino acids. Alanine, tryptophan, tyrosine and aspartate completely abolish the DNA binding ability of AldR. On the other hand, glutamate and asparagine reduce AldR binding to DNA but do not completely abolish it. Binding of amino acids can lead to structural modifications and changes in oligomeric association. Activity is also inhibited by 3 small molecule inhibitors, tetrahydroquinoline carbonitrile derivative (S010-0261), levothyroxine and liothyronine, which can disrupt the AldR-DNA complex. Its function is as follows. Transcriptional regulator that might play a role under hypoxic conditions. Regulates the expression of ald, which encodes L-alanine dehydrogenase. Serves as both an activator for ald expression in the presence of L-alanine and a repressor in the absence of L-alanine. Acts by binding directly to the upstream region of the ald gene. Four AldR-binding sites (O2, O1, O4 and O3) were identified upstream of the ald gene. O2, O1 and O4 are required for the induction of ald expression by alanine, while O3 is directly involved in the repression of ald expression, by occluding the access of RNA polymerase to the ald promoter. In addition to O3, both O1 and O4 are also necessary for full repression of ald expression in the absence of alanine. The polypeptide is HTH-type transcriptional regulator AldR (Mycobacterium tuberculosis (strain ATCC 25618 / H37Rv)).